The chain runs to 211 residues: Uracil phosphoribosyltransferase (211 aa).

5-phospho-alpha-D-ribose 1-diphosphate is bound by residues arginine 77, arginine 102, and aspartate 129–serine 137. Uracil is bound by residues isoleucine 192 and glycine 197 to alanine 199. Aspartate 198 is a 5-phospho-alpha-D-ribose 1-diphosphate binding site.

This sequence belongs to the UPRTase family. Mg(2+) serves as cofactor.

It carries out the reaction UMP + diphosphate = 5-phospho-alpha-D-ribose 1-diphosphate + uracil. It functions in the pathway pyrimidine metabolism; UMP biosynthesis via salvage pathway; UMP from uracil: step 1/1. With respect to regulation, allosterically activated by GTP. Its function is as follows. Catalyzes the conversion of uracil and 5-phospho-alpha-D-ribose 1-diphosphate (PRPP) to UMP and diphosphate. The chain is Uracil phosphoribosyltransferase from Corynebacterium efficiens (strain DSM 44549 / YS-314 / AJ 12310 / JCM 11189 / NBRC 100395).